The sequence spans 482 residues: tRNA sulfurtransferase (482 aa).

The region spanning 61 to 165 (KETLEVLTQT…NDKLNQVIER (105 aa)) is the THUMP domain. ATP contacts are provided by residues 183 to 184 (LI), Lys265, Gly287, and Gln296. Cysteines 344 and 456 form a disulfide. Positions 404–482 (VAEHAVVLDI…GFHNVKVYRP (79 aa)) constitute a Rhodanese domain. Cys456 acts as the Cysteine persulfide intermediate in catalysis.

It belongs to the ThiI family.

It is found in the cytoplasm. It catalyses the reaction [ThiI sulfur-carrier protein]-S-sulfanyl-L-cysteine + a uridine in tRNA + 2 reduced [2Fe-2S]-[ferredoxin] + ATP + H(+) = [ThiI sulfur-carrier protein]-L-cysteine + a 4-thiouridine in tRNA + 2 oxidized [2Fe-2S]-[ferredoxin] + AMP + diphosphate. The enzyme catalyses [ThiS sulfur-carrier protein]-C-terminal Gly-Gly-AMP + S-sulfanyl-L-cysteinyl-[cysteine desulfurase] + AH2 = [ThiS sulfur-carrier protein]-C-terminal-Gly-aminoethanethioate + L-cysteinyl-[cysteine desulfurase] + A + AMP + 2 H(+). The protein operates within cofactor biosynthesis; thiamine diphosphate biosynthesis. Functionally, catalyzes the ATP-dependent transfer of a sulfur to tRNA to produce 4-thiouridine in position 8 of tRNAs, which functions as a near-UV photosensor. Also catalyzes the transfer of sulfur to the sulfur carrier protein ThiS, forming ThiS-thiocarboxylate. This is a step in the synthesis of thiazole, in the thiamine biosynthesis pathway. The sulfur is donated as persulfide by IscS. In Vibrio atlanticus (strain LGP32) (Vibrio splendidus (strain Mel32)), this protein is tRNA sulfurtransferase.